The primary structure comprises 67 residues: Conotoxin VnMMSK-02 (67 aa).

The signal sequence occupies residues 1-20; the sequence is MMSKLGALLTICLLLFPLTA. A propeptide spanning residues 21–52 is cleaved from the precursor; sequence LPLDGDQPADRPAERMQDDISSEQHPLFDKER. Q53 is modified (pyrrolidone carboxylic acid). 3 disulfide bridges follow: C54/C66, C55/C62, and C59/C65. P64 is modified (4-hydroxyproline). C66 bears the Cysteine amide mark.

This sequence belongs to the conotoxin M superfamily. Expressed by the venom duct.

It is found in the secreted. The protein is Conotoxin VnMMSK-02 of Conus ventricosus (Mediterranean cone).